We begin with the raw amino-acid sequence, 491 residues long: UDP-N-acetylmuramate--L-alanine ligase (491 aa).

An ATP-binding site is contributed by 126-132 (GTHGKTT).

This sequence belongs to the MurCDEF family.

The protein resides in the cytoplasm. The catalysed reaction is UDP-N-acetyl-alpha-D-muramate + L-alanine + ATP = UDP-N-acetyl-alpha-D-muramoyl-L-alanine + ADP + phosphate + H(+). It participates in cell wall biogenesis; peptidoglycan biosynthesis. In terms of biological role, cell wall formation. This chain is UDP-N-acetylmuramate--L-alanine ligase, found in Salmonella gallinarum (strain 287/91 / NCTC 13346).